Consider the following 338-residue polypeptide: Adenylosuccinate synthetase (338 aa).

GTP-binding positions include 12-18 (GDEGKGK) and 42-44 (GHT). Asp-13 acts as the Proton acceptor in catalysis. The Mg(2+) site is built by Asp-13 and Gly-42. IMP is bound by residues 13-16 (DEGK), 40-43 (NAGH), Thr-127, Arg-141, Gln-179, Thr-194, and Arg-256. The active-site Proton donor is His-43. Position 252-258 (252-258 (TVTGRRR)) interacts with substrate. GTP-binding positions include Arg-258, 284–286 (CLD), and 324–326 (STG).

It belongs to the adenylosuccinate synthetase family. As to quaternary structure, homodimer. Mg(2+) serves as cofactor.

Its subcellular location is the cytoplasm. The enzyme catalyses IMP + L-aspartate + GTP = N(6)-(1,2-dicarboxyethyl)-AMP + GDP + phosphate + 2 H(+). It participates in purine metabolism; AMP biosynthesis via de novo pathway; AMP from IMP: step 1/2. Plays an important role in the de novo pathway of purine nucleotide biosynthesis. Catalyzes the first committed step in the biosynthesis of AMP from IMP. The polypeptide is Adenylosuccinate synthetase (Methanococcus maripaludis (strain DSM 14266 / JCM 13030 / NBRC 101832 / S2 / LL)).